Here is a 371-residue protein sequence, read N- to C-terminus: Transaldolase (371 aa).

Lys140 serves as the catalytic Schiff-base intermediate with substrate.

Belongs to the transaldolase family. Type 2 subfamily.

Its subcellular location is the cytoplasm. The catalysed reaction is D-sedoheptulose 7-phosphate + D-glyceraldehyde 3-phosphate = D-erythrose 4-phosphate + beta-D-fructose 6-phosphate. It participates in carbohydrate degradation; pentose phosphate pathway; D-glyceraldehyde 3-phosphate and beta-D-fructose 6-phosphate from D-ribose 5-phosphate and D-xylulose 5-phosphate (non-oxidative stage): step 2/3. In terms of biological role, transaldolase is important for the balance of metabolites in the pentose-phosphate pathway. This chain is Transaldolase, found in Arthrobacter sp. (strain FB24).